Here is a 443-residue protein sequence, read N- to C-terminus: KH domain-containing, RNA-binding, signal transduction-associated protein 1 (443 aa).

The segment at 1–95 is disordered; the sequence is MQRRDDPAAR…LLPPSATAAA (95 aa). Residues Ser18 and Ser20 each carry the phosphoserine modification. Lys21 is subject to N6-acetyllysine. Ser29 is subject to Phosphoserine. Thr33 carries the phosphothreonine modification. Arg45 and Arg52 each carry asymmetric dimethylarginine; by PRMT1. At Ser58 the chain carries Phosphoserine. Over residues 61–72 the composition is skewed to pro residues; sequence TQPPPLLPPSNP. Residues 81-95 are compositionally biased toward low complexity; that stretch reads SAPTPLLPPSATAAA. Position 84 is a phosphothreonine; by MAPK1 (Thr84). Glycyl lysine isopeptide (Lys-Gly) (interchain with G-Cter in SUMO2) cross-links involve residues Lys96 and Lys102. Residues 100–260 are involved in homodimerization; sequence ENKYLPELMA…VKKFLVPDMM (161 aa). Ser113 carries the phosphoserine modification. Residue Lys139 forms a Glycyl lysine isopeptide (Lys-Gly) (interchain with G-Cter in SUMO2) linkage. Position 150 is a phosphoserine (Ser150). The region spanning 171–197 is the KH domain; it reads NFVGKILGPQGNTIKRLQEETGAKISV. An N6-acetyllysine; alternate modification is found at Lys175. A Glycyl lysine isopeptide (Lys-Gly) (interchain with G-Cter in SUMO2); alternate cross-link involves residue Lys175. Thr183 bears the Phosphothreonine mark. The tract at residues 280 to 317 is disordered; that stretch reads PSRGRGVSVRGRGAAPPPPPVPRGRGVGPPRGALVRGT. Omega-N-methylarginine occurs at positions 282, 284, and 291. Low complexity predominate over residues 283–293; sequence GRGVSVRGRGA. Arg304 carries the asymmetric dimethylarginine; by PRMT1 modification. A compositionally biased stretch (low complexity) spans 307–316; sequence GPPRGALVRG. Omega-N-methylarginine; by PRMT1 occurs at positions 310 and 315. Residue Arg320 is modified to Dimethylated arginine; alternate. Omega-N-methylarginine; by PRMT1; alternate is present on Arg320. Arg325 is subject to Omega-N-methylarginine; by PRMT1. The tract at residues 326–345 is disordered; that stretch reads GATVTRGVPPPPTVRGAPTP. Dimethylated arginine; alternate is present on residues Arg331 and Arg340. Residues Arg331 and Arg340 each carry the omega-N-methylarginine; by PRMT1; alternate modification. At Arg331 the chain carries Asymmetric dimethylarginine; alternate. Residues 351–443 are interaction with HNRNPA1; sequence GIQRIPLPPT…AYREHPYGRY (93 aa). A Phosphotyrosine modification is found at Tyr387. A Phosphoserine modification is found at Ser390. The segment at 400-420 is interaction with ZBTB7A; that stretch reads GHGELQDSYEAYGQDDWNGTR. A disordered region spans residues 411 to 443; it reads YGQDDWNGTRPSLKAPPARPVKGAYREHPYGRY. Lys432 is covalently cross-linked (Glycyl lysine isopeptide (Lys-Gly) (interchain with G-Cter in SUMO2)). Basic and acidic residues predominate over residues 434–443; sequence AYREHPYGRY. Phosphotyrosine; by PTK6 occurs at positions 435, 440, and 443.

It belongs to the KHDRBS family. As to quaternary structure, self-associates to form homooligomers when bound to RNA, oligomerization appears to be limited when binding to proteins. Interacts with KHDRBS3/SLIM-2. Forms a trimeric complex in the nucleus consisting of BANP, HDAC6 and KHDRBS1/SAM68; HDAC6 keeps KHDRBS1 in a deacetylated state which inhibits the inclusion of CD44 alternate exons. The complex is disrupted by MAPK1/MAPK3-mediated phosphorylation of BANP which results in BANP export to the cytoplasm. This facilitates acetylation of KHDRBS1 and CD44 variant exon inclusion. Interacts with KHDRBS2/SLIM-1; heterooligomer formation of KHDRBS family proteins may modulate RNA substrate specificity. Interacts with PIK3R1, PLCG1. Interacts with RASA1, GRB2, SRC, CBP, PRMT1, APC, HNRNPA1. Interacts with PTK6 (via SH3 and SH2 domains). Forms a complex with ILF2, ILF3, YLPM1, RBMX, NCOA5 and PPP1CA. Binds WBP4/FBP21 (via WW domains), FNBP4/FBP30 (via WW domains). Interacts (via Arg/Gly-rich-flanked Pro-rich regions) with FYN (via the SH3 domain). Interacts with the non-receptor tyrosine kinase SRMS; the interaction leads to phosphorylation of KHDRBS1. Interacts with ZBTB7A; negatively regulates KHDRBS1 splicing activity toward BCL2L1. Tyrosine phosphorylated by several non-receptor tyrosine kinases including LCK, FYN and JAK3. Also tyrosine phosphorylated by the non-receptor tyrosine kinase SRMS in an EGF-dependent manner. Phosphorylation by PTK6 negatively regulates its RNA binding ability. Phosphorylation by PTK6 at Tyr-440 dictates the nuclear localization of KHDRBS1. In terms of processing, acetylated. Positively correlates with ability to bind RNA. Deacetylated by HDAC6; this regulates alternative splicing by inhibiting the inclusion of CD44 alternate exons. Post-translationally, arginine methylation is required for nuclear localization, Inhibits interaction with Src-like SH3 domains, but not interaction with WW domains of WBP4/FBP21 and FNBP4/FBP30.

The protein localises to the nucleus. It localises to the cytoplasm. It is found in the membrane. Its function is as follows. Recruited and tyrosine phosphorylated by several receptor systems, for example the T-cell, leptin and insulin receptors. Once phosphorylated, functions as an adapter protein in signal transduction cascades by binding to SH2 and SH3 domain-containing proteins. Role in G2-M progression in the cell cycle. Represses CBP-dependent transcriptional activation apparently by competing with other nuclear factors for binding to CBP. Also acts as a putative regulator of mRNA stability and/or translation rates and mediates mRNA nuclear export. Positively regulates the association of constitutive transport element (CTE)-containing mRNA with large polyribosomes and translation initiation. May not be involved in the nucleocytoplasmic export of unspliced (CTE)-containing RNA species. RNA-binding protein that plays a role in the regulation of alternative splicing and influences mRNA splice site selection and exon inclusion. Binds to RNA containing 5'-[AU]UAA-3' as a bipartite motif spaced by more than 15 nucleotides. Binds poly(A). Can regulate CD44 alternative splicing in a Ras pathway-dependent manner. In cooperation with HNRNPA1 modulates alternative splicing of BCL2L1 by promoting splicing toward isoform Bcl-X(S), and of SMN1. Can regulate alternative splicing of NRXN1 and NRXN3 in the laminin G-like domain 6 containing the evolutionary conserved neurexin alternative spliced segment 4 (AS4) involved in neurexin selective targeting to postsynaptic partners. In a neuronal activity-dependent manner cooperates synergistically with KHDRBS2/SLIM-1 in regulation of NRXN1 exon skipping at AS4. The cooperation with KHDRBS2/SLIM-1 is antagonistic for regulation of NXRN3 alternative splicing at AS4. This chain is KH domain-containing, RNA-binding, signal transduction-associated protein 1, found in Rattus norvegicus (Rat).